A 423-amino-acid chain; its full sequence is uncharacterized protein (423 aa).

A signal peptide spans 1–16; the sequence is MKSRIFFITLLTIVAA. The Extracellular segment spans residues 17–402; it reads QESADQLCSS…SSSAKEEQTS (386 aa). Intrachain disulfides connect cysteine 24-cysteine 217, cysteine 33-cysteine 43, cysteine 36-cysteine 68, cysteine 46-cysteine 57, cysteine 219-cysteine 238, cysteine 230-cysteine 241, cysteine 243-cysteine 252, cysteine 254-cysteine 288, cysteine 271-cysteine 286, cysteine 280-cysteine 291, cysteine 293-cysteine 303, cysteine 305-cysteine 327, cysteine 310-cysteine 325, cysteine 319-cysteine 330, cysteine 332-cysteine 341, and cysteine 343-cysteine 350. An N-linked (GlcNAc...) asparagine glycan is attached at asparagine 65. Residues 215–350 are cysteine-rich tandem repeats; sequence CGCECEKHPE…CSCSTASNNC (136 aa). I-EGF domains lie at 219 to 253, 254 to 304, and 305 to 342; these read CEKH…DKCE, CPLA…KFCQ, and CDND…DDCS. Asparagine 274 carries an N-linked (GlcNAc...) asparagine glycan. A glycan (N-linked (GlcNAc...) asparagine) is linked at asparagine 307. The tract at residues 354-406 is disordered; that stretch reads GTPAPEEKDKPESVPEEPEATEKPDDMPSDSDLEKELDESSSAKEEQTSSSGV. The span at 380–392 shows a compositional bias: acidic residues; that stretch reads MPSDSDLEKELDE. Residues 403-421 form a helical membrane-spanning segment; sequence SSGVVSRVCVLLTFFLLVL. Topologically, residues 422-423 are cytoplasmic; that stretch reads NF.

This sequence belongs to the integrin beta chain family.

It is found in the membrane. This is an uncharacterized protein from Caenorhabditis elegans.